The sequence spans 103 residues: Large ribosomal subunit protein bL21 (103 aa).

The protein belongs to the bacterial ribosomal protein bL21 family. As to quaternary structure, part of the 50S ribosomal subunit. Contacts protein L20.

Functionally, this protein binds to 23S rRNA in the presence of protein L20. This is Large ribosomal subunit protein bL21 from Shewanella baltica (strain OS223).